We begin with the raw amino-acid sequence, 1002 residues long: Collagen alpha-2(I) chain (1002 aa).

The disordered stretch occupies residues serine 1–serine 1002. Residues proline 10, proline 13, proline 28, and proline 34 each carry the 4-hydroxyproline modification. Low complexity predominate over residues glycine 17–proline 60. Lysine 89 is modified (5-hydroxylysine; alternate). Lysine 89 is a glycosylation site (O-linked (Gal...) hydroxylysine; alternate). 2 stretches are compositionally biased toward low complexity: residues serine 145–proline 166 and proline 211–proline 232. Positions glycine 266–glycine 275 are enriched in gly residues. Residues serine 276–serine 286 show a composition bias toward low complexity. Over residues glycine 308–glycine 317 the composition is skewed to gly residues. Residues proline 330–serine 346 show a composition bias toward low complexity. Proline 352 and proline 355 each carry 4-hydroxyproline. Low complexity predominate over residues leucine 381–alanine 400. Gly residues predominate over residues glycine 449–glycine 458. 2 stretches are compositionally biased toward low complexity: residues proline 505–proline 522 and glutamate 534–alanine 544. A compositionally biased stretch (gly residues) spans glycine 545–glycine 554. Composition is skewed to low complexity over residues valine 577–serine 621 and valine 628–alanine 648. Positions lysine 649–lysine 658 are enriched in basic and acidic residues. The segment covering proline 666–alanine 676 has biased composition (low complexity). Residues glycine 686–glycine 695 show a composition bias toward gly residues. Residues threonine 697 to threonine 706 show a composition bias toward low complexity. The segment covering glycine 743–glycine 752 has biased composition (gly residues). Low complexity-rich tracts occupy residues serine 760–proline 787 and leucine 795–proline 805. Over residues glycine 806–glycine 828 the composition is skewed to gly residues. Basic and acidic residues predominate over residues alanine 833–arginine 851. Low complexity predominate over residues tyrosine 853 to proline 898. Over residues arginine 908 to proline 919 the composition is skewed to basic and acidic residues. Residues serine 987–serine 1002 are compositionally biased toward pro residues.

Belongs to the fibrillar collagen family. In terms of assembly, trimers of one alpha 2(I) and two alpha 1(I) chains. Interacts (via C-terminus) with TMEM131 (via PapD-L domain); the interaction is direct and is involved in assembly and TRAPPIII ER-to-Golgi transport complex-dependent secretion of collagen. Post-translationally, prolines at the third position of the tripeptide repeating unit (G-X-Y) are hydroxylated in some or all of the chains. As to expression, expressed in bones.

The protein resides in the secreted. It is found in the extracellular space. The protein localises to the extracellular matrix. Functionally, type I collagen is a member of group I collagen (fibrillar forming collagen). The protein is Collagen alpha-2(I) chain of Glossotherium robustum (Ground sloth).